Consider the following 229-residue polypeptide: MKRSKKYLAVSQMFDIKKRYPLQEAIKLTKQSQITKFDATVECAFHLNLDPKKADQNLRGALVLPHGTGKTLKLAVIAKGEQAKIAKEAQADYVGDEDLIEKISKNWFDFDVLVSTPEMMPQLSKLGRLLGPKGLMPNPKTGTVTDNVGQAVSEIKNGKIEYRLDKNGNIHAIIGKTSFEEHKLLENLKTLYLQLMRIKPRTAKGNYIKNVTISTTMSPGIKIDPITIA.

Belongs to the universal ribosomal protein uL1 family. Part of the 50S ribosomal subunit.

Its function is as follows. Binds directly to 23S rRNA. The L1 stalk is quite mobile in the ribosome, and is involved in E site tRNA release. Functionally, protein L1 is also a translational repressor protein, it controls the translation of the L11 operon by binding to its mRNA. This Phytoplasma australiense protein is Large ribosomal subunit protein uL1.